Consider the following 623-residue polypeptide: Serine/threonine-protein kinase nrc-2 (623 aa).

The disordered stretch occupies residues 1–215 (MPSTKNANGE…GLGALPPPIR (215 aa)). Composition is skewed to basic and acidic residues over residues 27–36 (SKDHKDRDAH) and 170–180 (LSKEPLEESKD). Positions 199-209 (LAAPDADGLGA) are enriched in low complexity. The 291-residue stretch at 242–532 (FDKIKLIGKG…ASDIKTHPFF (291 aa)) folds into the Protein kinase domain. ATP is bound by residues 248 to 256 (IGKGDVGKV) and lysine 271. Aspartate 367 functions as the Proton acceptor in the catalytic mechanism. Residues 569–596 (VDISGSRQMGLKGEPLESGMVTPGENAV) are disordered.

This sequence belongs to the protein kinase superfamily. Ser/Thr protein kinase family. KIN82 subfamily.

The enzyme catalyses L-seryl-[protein] + ATP = O-phospho-L-seryl-[protein] + ADP + H(+). The catalysed reaction is L-threonyl-[protein] + ATP = O-phospho-L-threonyl-[protein] + ADP + H(+). In terms of biological role, controls entry of the cell into the asexual developmental program. Required to repress entry into the conidiation program. This chain is Serine/threonine-protein kinase nrc-2 (nrc-2), found in Neurospora crassa (strain ATCC 24698 / 74-OR23-1A / CBS 708.71 / DSM 1257 / FGSC 987).